The primary structure comprises 470 residues: Poly(A) polymerase catalytic subunit (470 aa).

Residues Asp-192 and Asp-194 contribute to the active site.

The protein belongs to the poxviridae poly(A) polymerase catalytic subunit family. Heterodimer of a large (catalytic) subunit and a small (regulatory) subunit.

The catalysed reaction is RNA(n) + ATP = RNA(n)-3'-adenine ribonucleotide + diphosphate. In terms of biological role, polymerase that creates the 3'-poly(A) tail of mRNA's. The protein is Poly(A) polymerase catalytic subunit (PAPL) of Oryctolagus cuniculus (Rabbit).